We begin with the raw amino-acid sequence, 331 residues long: Biotin synthase (331 aa).

A Radical SAM core domain is found at 52–277; the sequence is PDVEVEGIIS…RTMLRFAGGR (226 aa). [4Fe-4S] cluster contacts are provided by Cys67, Cys71, and Cys74. Residues Cys110, Cys143, Cys202, and Arg272 each coordinate [2Fe-2S] cluster.

Belongs to the radical SAM superfamily. Biotin synthase family. In terms of assembly, homodimer. The cofactor is [4Fe-4S] cluster. It depends on [2Fe-2S] cluster as a cofactor.

It carries out the reaction (4R,5S)-dethiobiotin + (sulfur carrier)-SH + 2 reduced [2Fe-2S]-[ferredoxin] + 2 S-adenosyl-L-methionine = (sulfur carrier)-H + biotin + 2 5'-deoxyadenosine + 2 L-methionine + 2 oxidized [2Fe-2S]-[ferredoxin]. Its pathway is cofactor biosynthesis; biotin biosynthesis; biotin from 7,8-diaminononanoate: step 2/2. Functionally, catalyzes the conversion of dethiobiotin (DTB) to biotin by the insertion of a sulfur atom into dethiobiotin via a radical-based mechanism. This is Biotin synthase from Mycobacterium sp. (strain JLS).